A 318-amino-acid chain; its full sequence is NADH-ubiquinone oxidoreductase chain 1 (318 aa).

Helical transmembrane passes span 2 to 22 (FMLN…FLTL), 68 to 88 (ITMF…MWIP), 100 to 120 (LGVL…LWSG), 147 to 167 (AIIL…TLII), 171 to 191 (YIWL…STLA), 217 to 237 (GGPF…MNAL), 254 to 273 (LYTT…FLWI), and 294 to 314 (LPLT…MAGI).

It belongs to the complex I subunit 1 family.

It is found in the mitochondrion inner membrane. The catalysed reaction is a ubiquinone + NADH + 5 H(+)(in) = a ubiquinol + NAD(+) + 4 H(+)(out). Core subunit of the mitochondrial membrane respiratory chain NADH dehydrogenase (Complex I) that is believed to belong to the minimal assembly required for catalysis. Complex I functions in the transfer of electrons from NADH to the respiratory chain. The immediate electron acceptor for the enzyme is believed to be ubiquinone. In Hsunycteris thomasi (Thomas's nectar bat), this protein is NADH-ubiquinone oxidoreductase chain 1 (MT-ND1).